A 185-amino-acid chain; its full sequence is Large ribosomal subunit protein uL22 (185 aa).

Residues 157–185 form a disordered region; sequence VAAPTPDEDAPKKKQSKKKMARQKLMQRD. Residues 169 to 178 show a composition bias toward basic residues; that stretch reads KKQSKKKMAR.

Belongs to the universal ribosomal protein uL22 family.

The chain is Large ribosomal subunit protein uL22 (RpL17) from Argas monolakensis (Mono lake bird tick).